The chain runs to 360 residues: tRNA pseudouridine synthase D (360 aa).

Catalysis depends on Asp76, which acts as the Nucleophile. The TRUD domain occupies 151 to 332 (GMPNFFGYQR…HGIYKEKNAW (182 aa)).

The protein belongs to the pseudouridine synthase TruD family.

The catalysed reaction is uridine(13) in tRNA = pseudouridine(13) in tRNA. Functionally, responsible for synthesis of pseudouridine from uracil-13 in transfer RNAs. This Nitratiruptor sp. (strain SB155-2) protein is tRNA pseudouridine synthase D.